We begin with the raw amino-acid sequence, 69 residues long: Large ribosomal subunit protein bL31 (69 aa).

Positions 16, 18, 36, and 39 each coordinate Zn(2+).

This sequence belongs to the bacterial ribosomal protein bL31 family. Type A subfamily. Part of the 50S ribosomal subunit. The cofactor is Zn(2+).

In terms of biological role, binds the 23S rRNA. The chain is Large ribosomal subunit protein bL31 from Kosmotoga olearia (strain ATCC BAA-1733 / DSM 21960 / TBF 19.5.1).